Here is a 604-residue protein sequence, read N- to C-terminus: Elongation factor 4 (604 aa).

Residues 7-189 form the tr-type G domain; sequence KNIRNFCIIA…QIVTKIPAPS (183 aa). GTP-binding positions include 19–24 and 136–139; these read DHGKST and NKID.

This sequence belongs to the TRAFAC class translation factor GTPase superfamily. Classic translation factor GTPase family. LepA subfamily.

It is found in the cell membrane. The catalysed reaction is GTP + H2O = GDP + phosphate + H(+). Functionally, required for accurate and efficient protein synthesis under certain stress conditions. May act as a fidelity factor of the translation reaction, by catalyzing a one-codon backward translocation of tRNAs on improperly translocated ribosomes. Back-translocation proceeds from a post-translocation (POST) complex to a pre-translocation (PRE) complex, thus giving elongation factor G a second chance to translocate the tRNAs correctly. Binds to ribosomes in a GTP-dependent manner. The protein is Elongation factor 4 of Lachnospira eligens (strain ATCC 27750 / DSM 3376 / VPI C15-48 / C15-B4) (Eubacterium eligens).